Reading from the N-terminus, the 217-residue chain is N-(5'-phosphoribosyl)anthranilate isomerase (217 aa).

This sequence belongs to the TrpF family.

It catalyses the reaction N-(5-phospho-beta-D-ribosyl)anthranilate = 1-(2-carboxyphenylamino)-1-deoxy-D-ribulose 5-phosphate. It functions in the pathway amino-acid biosynthesis; L-tryptophan biosynthesis; L-tryptophan from chorismate: step 3/5. The polypeptide is N-(5'-phosphoribosyl)anthranilate isomerase (Synechococcus elongatus (strain ATCC 33912 / PCC 7942 / FACHB-805) (Anacystis nidulans R2)).